The sequence spans 215 residues: Imidazole glycerol phosphate synthase subunit HisH (215 aa).

The Glutamine amidotransferase type-1 domain maps to 8 to 215 (KVVVFDYGFG…QLLNNWIGTL (208 aa)). The active-site Nucleophile is the Cys-86. Catalysis depends on residues His-196 and Glu-198.

Heterodimer of HisH and HisF.

Its subcellular location is the cytoplasm. The enzyme catalyses 5-[(5-phospho-1-deoxy-D-ribulos-1-ylimino)methylamino]-1-(5-phospho-beta-D-ribosyl)imidazole-4-carboxamide + L-glutamine = D-erythro-1-(imidazol-4-yl)glycerol 3-phosphate + 5-amino-1-(5-phospho-beta-D-ribosyl)imidazole-4-carboxamide + L-glutamate + H(+). It carries out the reaction L-glutamine + H2O = L-glutamate + NH4(+). Its pathway is amino-acid biosynthesis; L-histidine biosynthesis; L-histidine from 5-phospho-alpha-D-ribose 1-diphosphate: step 5/9. In terms of biological role, IGPS catalyzes the conversion of PRFAR and glutamine to IGP, AICAR and glutamate. The HisH subunit catalyzes the hydrolysis of glutamine to glutamate and ammonia as part of the synthesis of IGP and AICAR. The resulting ammonia molecule is channeled to the active site of HisF. In Streptomyces avermitilis (strain ATCC 31267 / DSM 46492 / JCM 5070 / NBRC 14893 / NCIMB 12804 / NRRL 8165 / MA-4680), this protein is Imidazole glycerol phosphate synthase subunit HisH.